A 457-amino-acid chain; its full sequence is tRNA-2-methylthio-N(6)-dimethylallyladenosine synthase (457 aa).

The MTTase N-terminal domain occupies 4–119 (RNFHIITFGC…APDAIERLYA (116 aa)). C13, C48, C82, C164, C168, and C171 together coordinate [4Fe-4S] cluster. The Radical SAM core domain maps to 150–385 (NTLALMAYVN…QATQLEHSTS (236 aa)). A TRAM domain is found at 388–456 (KSRVGVETTV…KHSLVAEPLI (69 aa)).

The protein belongs to the methylthiotransferase family. MiaB subfamily. Monomer. [4Fe-4S] cluster is required as a cofactor.

It localises to the cytoplasm. It catalyses the reaction N(6)-dimethylallyladenosine(37) in tRNA + (sulfur carrier)-SH + AH2 + 2 S-adenosyl-L-methionine = 2-methylsulfanyl-N(6)-dimethylallyladenosine(37) in tRNA + (sulfur carrier)-H + 5'-deoxyadenosine + L-methionine + A + S-adenosyl-L-homocysteine + 2 H(+). Functionally, catalyzes the methylthiolation of N6-(dimethylallyl)adenosine (i(6)A), leading to the formation of 2-methylthio-N6-(dimethylallyl)adenosine (ms(2)i(6)A) at position 37 in tRNAs that read codons beginning with uridine. The protein is tRNA-2-methylthio-N(6)-dimethylallyladenosine synthase of Lawsonia intracellularis (strain PHE/MN1-00).